A 445-amino-acid chain; its full sequence is Squalene synthase (445 aa).

A run of 2 helical transmembrane segments spans residues serine 291–tyrosine 311 and leucine 405–valine 425.

The protein belongs to the phytoene/squalene synthase family. Mg(2+) serves as cofactor.

Its subcellular location is the endoplasmic reticulum membrane. The catalysed reaction is 2 (2E,6E)-farnesyl diphosphate + NADPH + H(+) = squalene + 2 diphosphate + NADP(+). It catalyses the reaction 2 (2E,6E)-farnesyl diphosphate + NADH + H(+) = squalene + 2 diphosphate + NAD(+). It participates in terpene metabolism; lanosterol biosynthesis; lanosterol from farnesyl diphosphate: step 1/3. Functionally, catalyzes the condensation of 2 two farnesyl pyrophosphate moieties to form squalene. It is the first committed enzyme of the sterol biosynthesis pathway. Required for the biosynthesis of ergosterol. In Yarrowia lipolytica (strain CLIB 122 / E 150) (Yeast), this protein is Squalene synthase (SQS1).